A 136-amino-acid polypeptide reads, in one-letter code: Small ribosomal subunit protein uS19 (136 aa).

Belongs to the universal ribosomal protein uS19 family.

Functionally, protein S19 forms a complex with S13 that binds strongly to the 16S ribosomal RNA. This chain is Small ribosomal subunit protein uS19 (rps19), found in Methanothermobacter thermautotrophicus (strain ATCC 29096 / DSM 1053 / JCM 10044 / NBRC 100330 / Delta H) (Methanobacterium thermoautotrophicum).